A 187-amino-acid chain; its full sequence is Large ribosomal subunit protein uL10 (187 aa).

This sequence belongs to the universal ribosomal protein uL10 family. As to quaternary structure, part of the ribosomal stalk of the 50S ribosomal subunit. The N-terminus interacts with L11 and the large rRNA to form the base of the stalk. The C-terminus forms an elongated spine to which L12 dimers bind in a sequential fashion forming a multimeric L10(L12)X complex.

Its function is as follows. Forms part of the ribosomal stalk, playing a central role in the interaction of the ribosome with GTP-bound translation factors. This Roseiflexus castenholzii (strain DSM 13941 / HLO8) protein is Large ribosomal subunit protein uL10.